A 705-amino-acid polypeptide reads, in one-letter code: Ribosomal RNA large subunit methyltransferase K/L (705 aa).

The 112-residue stretch at 43–154 folds into the THUMP domain; the sequence is VVYRCCLWSR…GEKGILGFDL (112 aa).

It belongs to the methyltransferase superfamily. RlmKL family.

The protein resides in the cytoplasm. The catalysed reaction is guanosine(2445) in 23S rRNA + S-adenosyl-L-methionine = N(2)-methylguanosine(2445) in 23S rRNA + S-adenosyl-L-homocysteine + H(+). It carries out the reaction guanosine(2069) in 23S rRNA + S-adenosyl-L-methionine = N(2)-methylguanosine(2069) in 23S rRNA + S-adenosyl-L-homocysteine + H(+). In terms of biological role, specifically methylates the guanine in position 2445 (m2G2445) and the guanine in position 2069 (m7G2069) of 23S rRNA. The sequence is that of Ribosomal RNA large subunit methyltransferase K/L from Aliivibrio fischeri (strain MJ11) (Vibrio fischeri).